The following is a 687-amino-acid chain: Glycine--tRNA ligase beta subunit (687 aa).

It belongs to the class-II aminoacyl-tRNA synthetase family. As to quaternary structure, tetramer of two alpha and two beta subunits.

It is found in the cytoplasm. It carries out the reaction tRNA(Gly) + glycine + ATP = glycyl-tRNA(Gly) + AMP + diphosphate. The sequence is that of Glycine--tRNA ligase beta subunit from Geobacter sulfurreducens (strain ATCC 51573 / DSM 12127 / PCA).